A 161-amino-acid chain; its full sequence is Epoxidase gkaX (161 aa).

The N-terminal stretch at 1–18 is a signal peptide; the sequence is MSLSTSLRLLRLLPAISS. The N-linked (GlcNAc...) asparagine glycan is linked to Asn-45. Transmembrane regions (helical) follow at residues 59-79, 92-112, and 139-159; these read WQWI…LNLV, IWYV…KMAL, and WVRA…AAVS.

Belongs to the epoxidase xenD family.

Its subcellular location is the membrane. It participates in mycotoxin biosynthesis. Its function is as follows. Epoxidase; part of the gene cluster that mediates the biosynthesis of GKK1032, fungal natural products containing a macrocyclic para-cyclophane connected to a decahydrofluorene ring system that show potent antitumor activities. Within the pathway, gkaX functions synergistically with gkaB and gkaZ to form the cyclophane. The pathway begins with the PKS-NRPS gkaA which, with the help of the trans-enoyl reductase gkaC, synthesizes the polyketide-tyrosyl acyl thioester product which can be reductively off-loaded by the terminal reductase (R) domain in gkaA. The alpha/beta hydrolase gkaG is then required to catalyze the subsequent Knoevenagel condensation that affords the 3-pyrrolin-2-one ring, whereas the three proteins gkaB, gkaX and gkaZ then function synergistically to form the cyclophane. The chain is Epoxidase gkaX from Penicillium citrinum.